We begin with the raw amino-acid sequence, 262 residues long: MLYSSNAILLTVICYELPLSERIRMLLRLEDLFDKIDFFSARDTSFEHHAVLVALFEILDVTSRSDLKSDLLQELDKQRTMLEGLRSNPEVSEKALDHILQDIRAAFRGLLDIPGRIGGHLRDDEWLMSVKQRMSIPGAACEFDLPAYHYWLNLAPEIRREDLKDWITPFTPIRSGINIVLNMLRNSGKNCCYTAVQGLFQQAGSEHQAHLLRLHISSEFPCVPEISANKYALNIRFVPWRSDHKTEVYEEDIPFELTFCSL.

Belongs to the ZapD family. Interacts with FtsZ.

The protein localises to the cytoplasm. In terms of biological role, cell division factor that enhances FtsZ-ring assembly. Directly interacts with FtsZ and promotes bundling of FtsZ protofilaments, with a reduction in FtsZ GTPase activity. The polypeptide is Cell division protein ZapD (Nitrosomonas europaea (strain ATCC 19718 / CIP 103999 / KCTC 2705 / NBRC 14298)).